A 143-amino-acid chain; its full sequence is Large ribosomal subunit protein uL15 (143 aa).

The interval 1 to 51 (MELNTIKPASGAKHAKRRVGRGIGSGLGKTAGRGHKGQKSRAGGYHKVGFE) is disordered. Positions 21-31 (RGIGSGLGKTA) are enriched in gly residues.

The protein belongs to the universal ribosomal protein uL15 family. Part of the 50S ribosomal subunit.

Functionally, binds to the 23S rRNA. This chain is Large ribosomal subunit protein uL15, found in Methylibium petroleiphilum (strain ATCC BAA-1232 / LMG 22953 / PM1).